The following is a 594-amino-acid chain: UvrABC system protein C (594 aa).

Residues 13 to 99 (NSSGVYQYFD…IKQLKPKYNI (87 aa)) enclose the GIY-YIG domain. The 36-residue stretch at 205-240 (DRLIKELELKMERLSNNLRFEEALIYRDRIAKIQKI) folds into the UVR domain.

It belongs to the UvrC family. As to quaternary structure, interacts with UvrB in an incision complex.

It localises to the cytoplasm. Functionally, the UvrABC repair system catalyzes the recognition and processing of DNA lesions. UvrC both incises the 5' and 3' sides of the lesion. The N-terminal half is responsible for the 3' incision and the C-terminal half is responsible for the 5' incision. The chain is UvrABC system protein C from Helicobacter pylori (strain ATCC 700392 / 26695) (Campylobacter pylori).